A 584-amino-acid polypeptide reads, in one-letter code: MTHMPARPVDGAEPLSALPAGPMRQAGTQRSGIYEISKVLTAPARLEITLANVVNVLSSFLQIRCGAIVVLDAEGQPEIAATGDIPPSSQSAARGVIPKAVIDHIATTGMPLIVKDVSKSELFQAEPQPPWSSGTVPISFIGVPVKADNKILGTISIDRVRNDAAPFPADEDVRFLTMVANLVSRTIRLHRFLNLEGRRPIGEQERPEKPIIAQRGAPGRHPPVKIDGIIGDSPALQQVVETVSVVARTNSTVLLRGESGTGKEFFAQAIHELSPRKNKPFVKLNCAALPEGVLESELFGHEKGAFTGAIAQRAGRFELANGGTLLLDEIGEISPAFQAKLLRVLQEGELERVGGTKTLAVDVRLICATNKNLEMAVANAEFRADLYYRISVVPIVLPPLRERPGDIPRLANALLDRFNKENQRELTFSSSAIEVMSQCYFPGNVRELENCVRRTATLARSSSIVSSDFACKNSQCLSSLLWKTDGSPGGITVDGHARSNVMPTSSPRSGGSIGASDEVSSVKACDPHGSGCPAMESRLTQRDRLIEAMEKAGWVQAKAARILGLTPRQVGYALRQHRIEVKKL.

A disordered region spans residues Met1–Arg24. Residues Arg45 to Ile187 enclose the GAF domain. In terms of domain architecture, Sigma-54 factor interaction spans Ile229 to Thr457. Residues Gly257 to Glu264 and Ala320 to Glu329 each bind ATP. The interval Leu458–Gln541 is inter-domain linker. Cys471 and Cys476 together coordinate a divalent metal cation. The disordered stretch occupies residues Gly495–Glu518. The segment at Arg542 to Leu584 is C-terminal DNA-binding domain. Positions Gln556–Arg575 form a DNA-binding region, H-T-H motif.

Interacts with sigma-54.

Required for activation of most nif operons, which are directly involved in nitrogen fixation. The chain is Nif-specific regulatory protein (nifA) from Rhizobium etli (strain ATCC 51251 / DSM 11541 / JCM 21823 / NBRC 15573 / CFN 42).